The following is a 927-amino-acid chain: Protein unc-45 homolog B (927 aa).

TPR repeat units lie at residues 4–37 (PVQL…ITDK), 41–74 (AVLY…DASD), and 76–108 (KALF…EPKN). ARM repeat units follow at residues 167–206 (DAGA…GMCT), 209–248 (RARA…NIVD), and 746–785 (DKLR…NLAL).

Detected initially throughout the somites and the heart and gradually also expressed in the jaw, branchial arches and body wall muscles at later embryonic stages.

Its subcellular location is the cytoplasm. It localises to the myofibril. The protein localises to the sarcomere. The protein resides in the z line. It is found in the a band. Its subcellular location is the perinuclear region. It localises to the cytosol. Its function is as follows. Acts as a co-chaperone for HSP90 and is required for proper folding of the myosin motor domain. Plays a role in sarcomere formation during muscle cell development. Is necessary for normal early lens development. The sequence is that of Protein unc-45 homolog B from Xenopus tropicalis (Western clawed frog).